We begin with the raw amino-acid sequence, 38 residues long: Photosystem I reaction center subunit IX (38 aa).

A helical transmembrane segment spans residues 4–24 (FLTTAPVFSAIWFTLTAGIMI).

Belongs to the PsaJ family.

Its subcellular location is the plastid. The protein resides in the organellar chromatophore thylakoid membrane. Its function is as follows. May help in the organization of the PsaE and PsaF subunits. The protein is Photosystem I reaction center subunit IX of Paulinella chromatophora.